We begin with the raw amino-acid sequence, 338 residues long: MSRAKVGINGFGRIGRLVLRAAFLKNTVDVVSVNDPFIDLEYMVYMIKRDSTHGTFPGEVSTENGKLKVNGKLISVHCERDPANIPWDKDGAEYVVESTGVFTTIDKAQAHIKNNRAKKVIISAPSADAPMFVVGVNENSYEKSMSVVSNASCTTNCLAPLAKVIHDKFEIVEGLMTTVHSFTATQKVVDGPSSKLWRDGRGAMQNIIPASTGAAKAVGKVIPALNGKLTGMAFRVPTPDVSVVDLTCRLGKGASYEEIKAAVKAAASGPLKGILEYTEDEVVSSDFVGSTSSSIFDAKAGISLNNNFVKLVSWYDNEFGYSCRVVDLITHMHKVDHA.

Arginine 13, isoleucine 14, aspartate 35, arginine 80, and serine 123 together coordinate NAD(+). Residues serine 152, cysteine 153, threonine 154, threonine 183, arginine 198, threonine 212, glycine 213, and arginine 235 each coordinate D-glyceraldehyde 3-phosphate. Catalysis depends on cysteine 153, which acts as the Nucleophile. NAD(+) is bound at residue asparagine 317.

It belongs to the glyceraldehyde-3-phosphate dehydrogenase family. As to quaternary structure, homotetramer.

The protein localises to the tegument membrane. The catalysed reaction is D-glyceraldehyde 3-phosphate + phosphate + NAD(+) = (2R)-3-phospho-glyceroyl phosphate + NADH + H(+). It participates in carbohydrate degradation; glycolysis; pyruvate from D-glyceraldehyde 3-phosphate: step 1/5. Functionally, this antigen is associated with human resistance to schistosomiasis. The protein is Glyceraldehyde-3-phosphate dehydrogenase of Schistosoma mansoni (Blood fluke).